Here is a 247-residue protein sequence, read N- to C-terminus: Chalcone--flavanone isomerase (247 aa).

Threonine 56, asparagine 121, and serine 198 together coordinate substrate. Positions 223-235 are enriched in basic and acidic residues; the sequence is ENKVEEDATKTDQ. The interval 223-247 is disordered; that stretch reads ENKVEEDATKTDQEEANDLSLAKEN.

Belongs to the chalcone isomerase family.

It carries out the reaction a chalcone = a flavanone.. Its pathway is secondary metabolite biosynthesis; flavonoid biosynthesis. In terms of biological role, catalyzes the intramolecular cyclization of bicyclic chalcones into tricyclic (S)-flavanones. Responsible for the isomerization of 4,2',4',6'-tetrahydroxychalcone (also termed chalcone) into naringenin. This is Chalcone--flavanone isomerase (CHI) from Raphanus sativus (Radish).